A 1775-amino-acid chain; its full sequence is ATP-dependent RNA helicase DEAH12, chloroplastic (1775 aa).

The N-terminal 33 residues, 1-33 (MRNSFPPSDGGRSATDRRQQSSHSSSTNRYNSR), are a transit peptide targeting the chloroplast. Residues 1–77 (MRNSFPPSDG…NPSSGYSPPV (77 aa)) form a disordered region. Residues 21 to 34 (SSHSSSTNRYNSRS) are compositionally biased toward low complexity. Residues 35–60 (AQSSPPLNHRPTWNQQHSQYPNSNFP) are compositionally biased toward polar residues. The Helicase ATP-binding domain maps to 316–480 (LKKIHREQIM…FFSCGILLVN (165 aa)). Residue 329–336 (GETGSGKS) coordinates ATP. Residues 427-430 (DEAH) carry the DEAH box motif. Residues 510 to 676 (DVVKMAVEIH…VALLRMLALG (167 aa)) form the Helicase C-terminal domain. Residues 1560–1767 (IEVECPICLS…EPCYAHLRTI (208 aa)) are TRIAD supradomain. Positions 1564, 1567, 1580, 1582, 1585, 1588, 1607, 1612, 1652, 1657, 1675, 1678, 1683, 1686, 1691, 1696, 1722, and 1725 each coordinate Zn(2+). Residues 1564 to 1612 (CPICLSEVDDGYSLEGCSHLFCKACLLEQFEASMRNFDAFPILCSHIDC) form an RING-type 1 zinc finger. The segment at 1631 to 1696 (DELFSASLSS…HLEYHPLITC (66 aa)) adopts an IBR-type zinc-finger fold. Residues 1722–1750 (CPICKSTIEKTDGCNHMKCRCGKHICWTC) form an RING-type 2; atypical zinc finger. Cys-1735 is a catalytic residue. Cys-1740 and Cys-1742 together coordinate Zn(2+).

Belongs to the DEAD box helicase family. DEAH subfamily.

The protein resides in the plastid. The protein localises to the chloroplast. The catalysed reaction is ATP + H2O = ADP + phosphate + H(+). The polypeptide is ATP-dependent RNA helicase DEAH12, chloroplastic (Arabidopsis thaliana (Mouse-ear cress)).